Consider the following 343-residue polypeptide: MALRLLRLVPPRVGGIHTSVQFKLQYGPLAYILGEKATKKMTEKSKLITVDGNICSGKSKLAKEIAEKLGLKHFPEAGIHYVDSTTGDGKPLPVQFSGNCSLEKFYDDPKSNDGNSYRLQAWLYASRLLQYADALEHLLSTGQGVVLERSIYSDFVFLEAMYRQGFIRKQCVDHYNQVKKVTICEYLPPHVVVYVDVPVPEVQSRIQKKGNPHEMKITSAYLQDIENAYKGTFLPEMSEKCEVLQYSAWEAQDAEKVVEDIEYLKYDKGPWLDQNDRNLHKLRMLVQDKLEVLNYTSIPVFLPEVTVGAHQSDQVFQEFTELPGRKYRAGYNEDVGDKWIWLK.

The N-terminal 23 residues, 1–23 (MALRLLRLVPPRVGGIHTSVQFK), are a transit peptide targeting the mitochondrion. Lys-110 is modified (N6-acetyllysine; alternate). Position 110 is an N6-succinyllysine; alternate (Lys-110). Ser-238 carries the phosphoserine; by PINK1 modification.

The protein belongs to the complex I NDUFA10 subunit family. Complex I is composed of 45 different subunits. This a component of the hydrophobic protein fraction. It depends on FAD as a cofactor. Post-translationally, phosphorylation at Ser-238 by PINK1 is required for the binding and/or reduction of the complex I substrate ubiquinone.

The protein localises to the mitochondrion matrix. In terms of biological role, accessory subunit of the mitochondrial membrane respiratory chain NADH dehydrogenase (Complex I), that is believed not to be involved in catalysis. Complex I functions in the transfer of electrons from NADH to the respiratory chain. The immediate electron acceptor for the enzyme is believed to be ubiquinone. The polypeptide is NADH dehydrogenase [ubiquinone] 1 alpha subcomplex subunit 10, mitochondrial (NDUFA10) (Bos taurus (Bovine)).